Consider the following 334-residue polypeptide: Procathepsin L (334 aa).

A signal peptide spans 1-17; that stretch reads MTPLLLLAVLCLGTALA. The propeptide at 18-113 is activation peptide; that stretch reads TPKFDQTFNA…RLFQEPLMLQ (96 aa). E122 provides a ligand contact to Zn(2+). Intrachain disulfides connect C135-C178 and C169-C211. Residue C138 is part of the active site. 9 residues coordinate Zn(2+): E163, D184, E199, E205, D227, D250, H253, D273, and D275. C269 and C322 form a disulfide bridge. H276 is an active-site residue. Residues 289–290 constitute a propeptide that is removed on maturation; that stretch reads DS. N300 is a catalytic residue.

This sequence belongs to the peptidase C1 family. As to quaternary structure, dimer of a heavy and a light chain linked by disulfide bonds. Interacts with Long isoform of CD74/Ii chain; the interaction stabilizes the conformation of mature CTSL. Post-translationally, during export along the endocytic pathway, pro-CTSL undergoes several proteolytic cleavages to generate the CTSL single-chain and two-chain mature forms, composed of a heavy chain linked to a light chain by disulfide bonds. Autocleavage; produces the single-chain CTSL after cleavage of the propeptide. The cleavage can be intermolecular. In terms of tissue distribution, both mature cathepsin L1 and procathepsin L are found in the upper epidermis. The lower epidermis predominantly contains procathepsin L. In seminiferous tubules expression is greater at stages VI-VII than at stages IX-XII.

Its subcellular location is the lysosome. The protein resides in the apical cell membrane. It localises to the cytoplasmic vesicle. It is found in the secretory vesicle. The protein localises to the chromaffin granule. Its subcellular location is the secreted. The protein resides in the extracellular space. It carries out the reaction Specificity close to that of papain. As compared to cathepsin B, cathepsin L exhibits higher activity toward protein substrates, but has little activity on Z-Arg-Arg-NHMec, and no peptidyl-dipeptidase activity.. With respect to regulation, inhibited by the propeptide produced by autocleavage. Long isoform of CD74/Ii chain stabilizes the conformation of mature CTSL by binding to its active site and serving as a chaperone to help maintain a pool of mature enzyme in endocytic compartments and extracellular space of APCs. IFNG enhances the conversion into the CTSL mature and active form. Inhibited by CST6. Inhibited by the glycopeptide antibiotic teicoplanin. Inhibited by amantadine. Its function is as follows. Thiol protease important for the overall degradation of proteins in lysosomes. Plays a critical for normal cellular functions such as general protein turnover, antigen processing and bone remodeling. Involved in the solubilization of cross-linked TG/thyroglobulin and in the subsequent release of thyroid hormone thyroxine (T4) by limited proteolysis of TG/thyroglobulin in the thyroid follicle lumen. In neuroendocrine chromaffin cells secretory vesicles, catalyzes the prohormone proenkephalin processing to the active enkephalin peptide neurotransmitter. In thymus, regulates CD4(+) T cell positive selection by generating the major histocompatibility complex class II (MHCII) bound peptide ligands presented by cortical thymic epithelial cells. Also mediates invariant chain processing in cortical thymic epithelial cells. Major elastin-degrading enzyme at neutral pH. Accumulates as a mature and active enzyme in the extracellular space of antigen presenting cells (APCs) to regulate degradation of the extracellular matrix in the course of inflammation. Secreted form generates endostatin from COL18A1. Critical for cardiac morphology and function. Plays an important role in hair follicle morphogenesis and cycling, as well as epidermal differentiation. Required for maximal stimulation of steroidogenesis by TIMP1. This chain is Procathepsin L, found in Rattus norvegicus (Rat).